The sequence spans 581 residues: Proline--tRNA ligase (581 aa).

Belongs to the class-II aminoacyl-tRNA synthetase family. ProS type 1 subfamily. Homodimer.

It localises to the cytoplasm. The enzyme catalyses tRNA(Pro) + L-proline + ATP = L-prolyl-tRNA(Pro) + AMP + diphosphate. In terms of biological role, catalyzes the attachment of proline to tRNA(Pro) in a two-step reaction: proline is first activated by ATP to form Pro-AMP and then transferred to the acceptor end of tRNA(Pro). As ProRS can inadvertently accommodate and process non-cognate amino acids such as alanine and cysteine, to avoid such errors it has two additional distinct editing activities against alanine. One activity is designated as 'pretransfer' editing and involves the tRNA(Pro)-independent hydrolysis of activated Ala-AMP. The other activity is designated 'posttransfer' editing and involves deacylation of mischarged Ala-tRNA(Pro). The misacylated Cys-tRNA(Pro) is not edited by ProRS. This is Proline--tRNA ligase from Blochmanniella floridana.